The sequence spans 264 residues: NFAT activation molecule 1 (264 aa).

The signal sequence occupies residues methionine 1–glutamine 37. Residues leucine 38 to alanine 159 lie on the Extracellular side of the membrane. The Ig-like V-type domain maps to leucine 49 to arginine 145. Cysteine 64 and cysteine 110 form a disulfide bridge. Asparagine 105 and asparagine 118 each carry an N-linked (GlcNAc...) asparagine glycan. A helical transmembrane segment spans residues leucine 160–leucine 180. Residues tryptophan 181–leucine 264 are Cytoplasmic-facing. Residues glutamate 212–glutamate 232 form the ITAM domain. Phosphotyrosine is present on residues tyrosine 215 and tyrosine 226.

As to quaternary structure, no direct interaction with the B-cell antigen receptor (BCR). Interacts with SYK; probably involved in BCR signaling. Interacts with ZAP70. Post-translationally, N-glycosylated. Highly expressed in the spleen, expressed by both B- and CD4+ and CD8+ T-cells, as well as non-T- and non-B-cells, including macrophages and neutrophils. Expressed at low levels, if any, in non-immune tissue.

The protein resides in the cell membrane. In terms of biological role, may function in immune system as a receptor which activates via the calcineurin/NFAT-signaling pathway the downstream cytokine gene promoters. Activates the transcription of IL-13 and TNF-alpha promoters. May be involved in the regulation of B-cell, but not T-cell, development. This is NFAT activation molecule 1 (Nfam1) from Mus musculus (Mouse).